The chain runs to 2071 residues: GTPase-activating protein BEM2 (2071 aa).

Disordered regions lie at residues 1 to 115 and 171 to 195; these read MPLK…QAHK and AAPA…SERP. 2 stretches are compositionally biased toward low complexity: residues 16–31 and 42–55; these read PQSC…QSSC and SSIS…SKNN. Polar residues predominate over residues 62 to 80; it reads SNGSVYSDETTLKTAQTHY. The segment covering 81–110 has biased composition (low complexity); sequence TQQGQQAKPQQHTQQQQQQPQTPMQLQVPT. Polar residues predominate over residues 181-191; it reads HQPTASLSSIG. Positions 471–738 constitute a Ras-GEF domain; sequence DTEKVANQIH…MEMSLKMEPP (268 aa). Positions 787 to 811 are enriched in polar residues; sequence PSTKNNNSSQASNRISQLSVNSTPH. Disordered stretches follow at residues 787-819, 1645-1676, and 1702-1738; these read PSTK…SSSA, RSVL…ARTS, and SVSS…GMGK. Composition is skewed to low complexity over residues 1656-1676 and 1702-1726; these read SVSS…ARTS and SVSS…ASPN. The 103-residue stretch at 1751 to 1853 folds into the PH domain; the sequence is SGFTSSSSQY…WMKAITLSKR (103 aa). A Rho-GAP domain is found at 1872–2070; the sequence is VPVEDVCERE…HLIRNPEHYF (199 aa).

In terms of biological role, GTPase-activating protein (GAP) for RHO proteins. Required for polarized growth and maintenance of cell polarity. This chain is GTPase-activating protein BEM2 (BEM2), found in Eremothecium gossypii (strain ATCC 10895 / CBS 109.51 / FGSC 9923 / NRRL Y-1056) (Yeast).